The chain runs to 117 residues: U9-theraphotoxin-Hhn1a (117 aa).

An N-terminal signal peptide occupies residues 1-21 (MNTVRVTFLLVFVLAVSLGQA). Residues 22–75 (DEDGNRMEMRQEIEKTEADSSYFAENLLLQKLEELEAKLWEETSEESRNSRQKR) constitute a propeptide that is removed on maturation. 3 cysteine pairs are disulfide-bonded: Cys-76/Cys-94, Cys-83/Cys-99, and Cys-93/Cys-114.

Belongs to the neurotoxin 14 (magi-1) family. 01 (HNTX-16) subfamily. Expressed by the venom gland.

It is found in the secreted. Probable ion channel inhibitor. This Cyriopagopus hainanus (Chinese bird spider) protein is U9-theraphotoxin-Hhn1a.